Consider the following 290-residue polypeptide: MASLRDLKRQIQSVKNIAKVTDALQAVSAVKFRKAEARVKQARPYAENMEEVMRAIASKASTRNPMLAGREQVRRVAVATLTSDRGLCGSFNAQVLRRTVRFREQQGAEALQVASGRKGIAFFRFRRIGLAESYSGFTDDPSYEDAQRIGRGLTRLFEREEADEVYLVYNRFVNPAVQRPVVVRLLPAAPEGGEEGEGGTVSGAPFDFIPDADTILRRLIPQYVETLVWQALLESAAGEHGARMTAMKNATDNANELVDTLTLQMNKARQAQITREISEIAAGAEALAAG.

The protein belongs to the ATPase gamma chain family. F-type ATPases have 2 components, CF(1) - the catalytic core - and CF(0) - the membrane proton channel. CF(1) has five subunits: alpha(3), beta(3), gamma(1), delta(1), epsilon(1). CF(0) has three main subunits: a, b and c.

It localises to the cell membrane. Functionally, produces ATP from ADP in the presence of a proton gradient across the membrane. The gamma chain is believed to be important in regulating ATPase activity and the flow of protons through the CF(0) complex. The sequence is that of ATP synthase gamma chain from Rubrobacter xylanophilus (strain DSM 9941 / JCM 11954 / NBRC 16129 / PRD-1).